Here is a 399-residue protein sequence, read N- to C-terminus: Probable peptidoglycan glycosyltransferase FtsW (399 aa).

The Cytoplasmic portion of the chain corresponds to 1 to 32 (MMAGFAQTTITKINQFYERWMPRLPAEMTARN). A helical membrane pass occupies residues 33–53 (VLVFCVVCLLCIGSVMVASAS). Over 54 to 72 (MPYAEYMHENPFHYVVRHA) the chain is Periplasmic. Residues 73 to 93 (ISIATAAIVAYLVYKVPLNVW) traverse the membrane as a helical segment. At 94–97 (FKNT) the chain is on the cytoplasmic side. The helical transmembrane segment at 98–118 (FSFWLITILLLLAVLVIGTEV) threads the bilayer. Residues 119 to 126 (NGSRRWIR) lie on the Periplasmic side of the membrane. A helical membrane pass occupies residues 127–147 (LAGFTLQPTEVAKVMMAIFTA). Residues 148–159 (DYVVRRAKEVRT) lie on the Cytoplasmic side of the membrane. The chain crosses the membrane as a helical span at residues 160–180 (HWKGLVRLSGVMAITVGLIIA). The Periplasmic portion of the chain corresponds to 181–183 (EPD). Residues 184–204 (LGATVVIVLMMVGIFFLAGAP) form a helical membrane-spanning segment. The Cytoplasmic segment spans residues 205 to 207 (PTQ). The helical transmembrane segment at 208 to 228 (FAIMLGAVVMGIGFLILFEPY) threads the bilayer. Over 229-292 (RLARAMSFTN…DFMLAVLGEE (64 aa)) the chain is Periplasmic. The helical transmembrane segment at 293–313 (FGFVGISIVIGLSFIMLACCI) threads the bilayer. At 314-327 (KIGHRALKHNFLRA) the chain is on the cytoplasmic side. Residues 328 to 348 (GYLAYGISIIFLLQIIVNAGM) traverse the membrane as a helical segment. The Periplasmic portion of the chain corresponds to 349 to 359 (NMGLMPTKGLT). Residues 360-380 (LPFISYGGTSLMMCAAMISLI) form a helical membrane-spanning segment. Residues 381–399 (LRIDASTQEINPDREESNF) are Cytoplasmic-facing.

It belongs to the SEDS family. FtsW subfamily.

The protein localises to the cell inner membrane. It carries out the reaction [GlcNAc-(1-&gt;4)-Mur2Ac(oyl-L-Ala-gamma-D-Glu-L-Lys-D-Ala-D-Ala)](n)-di-trans,octa-cis-undecaprenyl diphosphate + beta-D-GlcNAc-(1-&gt;4)-Mur2Ac(oyl-L-Ala-gamma-D-Glu-L-Lys-D-Ala-D-Ala)-di-trans,octa-cis-undecaprenyl diphosphate = [GlcNAc-(1-&gt;4)-Mur2Ac(oyl-L-Ala-gamma-D-Glu-L-Lys-D-Ala-D-Ala)](n+1)-di-trans,octa-cis-undecaprenyl diphosphate + di-trans,octa-cis-undecaprenyl diphosphate + H(+). Its pathway is cell wall biogenesis; peptidoglycan biosynthesis. In terms of biological role, peptidoglycan polymerase that is essential for cell division. This is Probable peptidoglycan glycosyltransferase FtsW from Acinetobacter baylyi (strain ATCC 33305 / BD413 / ADP1).